The following is a 471-amino-acid chain: UDP-N-acetylmuramate--L-alanine ligase (471 aa).

ATP is bound at residue 114–120 (GTHGKTT).

The protein belongs to the MurCDEF family.

It localises to the cytoplasm. The catalysed reaction is UDP-N-acetyl-alpha-D-muramate + L-alanine + ATP = UDP-N-acetyl-alpha-D-muramoyl-L-alanine + ADP + phosphate + H(+). It functions in the pathway cell wall biogenesis; peptidoglycan biosynthesis. In terms of biological role, cell wall formation. This is UDP-N-acetylmuramate--L-alanine ligase from Sinorhizobium medicae (strain WSM419) (Ensifer medicae).